A 77-amino-acid polypeptide reads, in one-letter code: U14-theraphotoxin-Cg1a 1 (77 aa).

Residues 1-21 form the signal peptide; it reads MKTSVLLVILGIAAITVQCTA. Residues 22-49 constitute a propeptide that is removed on maturation; it reads SESVEQDSLRTFVDAVLGWNAEMASEAR. 3 disulfides stabilise this stretch: Cys50–Cys64, Cys57–Cys69, and Cys63–Cys75. Lys77 bears the Lysine amide mark.

It belongs to the neurotoxin 10 (Hwtx-1) family. 65 (Jztx-21) subfamily. Expressed by the venom gland.

It is found in the secreted. Its function is as follows. Probable ion channel inhibitor. The protein is U14-theraphotoxin-Cg1a 1 of Chilobrachys guangxiensis (Chinese earth tiger tarantula).